The sequence spans 469 residues: Glutamate-1-semialdehyde 2,1-aminomutase, chloroplastic (469 aa).

The N-terminal 34 residues, Met-1–Ala-34, are a transit peptide targeting the chloroplast. Lys-309 carries the N6-(pyridoxal phosphate)lysine modification.

Belongs to the class-III pyridoxal-phosphate-dependent aminotransferase family. HemL subfamily. Homodimer. Requires pyridoxal 5'-phosphate as cofactor.

Its subcellular location is the plastid. The protein localises to the chloroplast. It carries out the reaction (S)-4-amino-5-oxopentanoate = 5-aminolevulinate. The protein operates within porphyrin-containing compound metabolism; protoporphyrin-IX biosynthesis; 5-aminolevulinate from L-glutamyl-tRNA(Glu): step 2/2. Its pathway is porphyrin-containing compound metabolism; chlorophyll biosynthesis. This chain is Glutamate-1-semialdehyde 2,1-aminomutase, chloroplastic (GSA), found in Hordeum vulgare (Barley).